The following is a 567-amino-acid chain: Wee1-like protein kinase 2 (567 aa).

4 stretches are compositionally biased toward basic and acidic residues: residues 1-12 (MDDKDIDKELRQ), 25-35 (EGQKKVEESRE), 42-51 (EKGEVQDSEA), and 64-77 (HELDTSSEKDKESP). Positions 1-117 (MDDKDIDKEL…DSPSTPKTML (117 aa)) are disordered. Ser76 carries the post-translational modification Phosphoserine. The Nuclear localization signal motif lies at 173 to 175 (KRK). A Protein kinase domain is found at 212 to 486 (FLEVEKIGVG…AAALARNTVL (275 aa)). ATP contacts are provided by residues 218-226 (IGVGEFGTV) and Lys241. Residues 315–329 (KLKDILLQISLGLNY) carry the Nuclear export signal motif. Asp339 acts as the Proton acceptor in catalysis. The Mg(2+) site is built by Asn344 and Asp380. Positions 494 to 519 (EELQQQLNLEKFKTATLERELREAQQ) form a coiled coil. Positions 514–567 (LREAQQAQSPQGYTHHGDTGVSGTHTGSRSTKRLVGGKSARSSSFTSGEREPLH) are disordered.

This sequence belongs to the protein kinase superfamily. Ser/Thr protein kinase family. WEE1 subfamily. Post-translationally, phosphorylated on serine residues. Phosphorylation leads to increase its activity. In terms of tissue distribution, expressed in oocytes (at protein level). May also be expressed in testis.

It is found in the nucleus. The enzyme catalyses L-tyrosyl-[protein] + ATP = O-phospho-L-tyrosyl-[protein] + ADP + H(+). Functionally, oocyte-specific protein tyrosine kinase that phosphorylates and inhibits CDK1/CDC2 and acts as a key regulator of meiosis during both prophase I and metaphase II. Required to maintain meiotic arrest in oocytes during the germinal vesicle (GV) stage, a long period of quiescence at dictyate prophase I, by phosphorylating CDK1 at 'Tyr-15', leading to inhibit CDK1 activity and prevent meiotic reentry. Also required for metaphase II exit during egg activation by phosphorylating CDK1 at 'Tyr-15', to ensure exit from meiosis in oocytes and promote pronuclear formation. This Homo sapiens (Human) protein is Wee1-like protein kinase 2 (WEE2).